The chain runs to 363 residues: UDP-N-acetylglucosamine--N-acetylmuramyl-(pentapeptide) pyrophosphoryl-undecaprenol N-acetylglucosamine transferase (363 aa).

UDP-N-acetyl-alpha-D-glucosamine is bound by residues 10 to 12 (TGG), Asn124, Ser195, Ile248, and Gln293.

Belongs to the glycosyltransferase 28 family. MurG subfamily.

It localises to the cell membrane. It catalyses the reaction Mur2Ac(oyl-L-Ala-gamma-D-Glu-L-Lys-D-Ala-D-Ala)-di-trans,octa-cis-undecaprenyl diphosphate + UDP-N-acetyl-alpha-D-glucosamine = beta-D-GlcNAc-(1-&gt;4)-Mur2Ac(oyl-L-Ala-gamma-D-Glu-L-Lys-D-Ala-D-Ala)-di-trans,octa-cis-undecaprenyl diphosphate + UDP + H(+). It functions in the pathway cell wall biogenesis; peptidoglycan biosynthesis. In terms of biological role, cell wall formation. Catalyzes the transfer of a GlcNAc subunit on undecaprenyl-pyrophosphoryl-MurNAc-pentapeptide (lipid intermediate I) to form undecaprenyl-pyrophosphoryl-MurNAc-(pentapeptide)GlcNAc (lipid intermediate II). The polypeptide is UDP-N-acetylglucosamine--N-acetylmuramyl-(pentapeptide) pyrophosphoryl-undecaprenol N-acetylglucosamine transferase (Lacticaseibacillus casei (strain BL23) (Lactobacillus casei)).